Reading from the N-terminus, the 445-residue chain is tRNA modification GTPase MnmE (445 aa).

The (6S)-5-formyl-5,6,7,8-tetrahydrofolate site is built by arginine 20, glutamate 79, and lysine 119. Residues 215-371 form the TrmE-type G domain; the sequence is GLKLAIIGPP…ILKNIENIAE (157 aa). Asparagine 225 lines the K(+) pocket. Residues 225-230, 244-250, and 269-272 each bind GTP; these read NTGKSS, SNIAGTT, and DTAG. Serine 229 lines the Mg(2+) pocket. Serine 244, isoleucine 246, and threonine 249 together coordinate K(+). Threonine 250 serves as a coordination point for Mg(2+). Lysine 445 contributes to the (6S)-5-formyl-5,6,7,8-tetrahydrofolate binding site.

Belongs to the TRAFAC class TrmE-Era-EngA-EngB-Septin-like GTPase superfamily. TrmE GTPase family. As to quaternary structure, homodimer. Heterotetramer of two MnmE and two MnmG subunits. K(+) is required as a cofactor.

The protein resides in the cytoplasm. In terms of biological role, exhibits a very high intrinsic GTPase hydrolysis rate. Involved in the addition of a carboxymethylaminomethyl (cmnm) group at the wobble position (U34) of certain tRNAs, forming tRNA-cmnm(5)s(2)U34. This is tRNA modification GTPase MnmE from Rickettsia typhi (strain ATCC VR-144 / Wilmington).